Reading from the N-terminus, the 348-residue chain is Tocopherol O-methyltransferase, chloroplastic (348 aa).

Residues 1–51 (MKATLAAPSSLTSLPYRTNSSFGSKSSLLFRSPSSSSSVSMTTTRGNVAVA) constitute a chloroplast transit peptide. Ala-52 is modified (N-acetylalanine). An SAM motif I region spans residues 130–139 (VVDVGCGIGG). Residues 193 to 201 (GKFDLVWSM) form an SAM motif II region. An SAM motif III region spans residues 220 to 229 (VAAPGGRIII).

Belongs to the class I-like SAM-binding methyltransferase superfamily. gTMT family.

The protein resides in the plastid. Its subcellular location is the chloroplast. It carries out the reaction gamma-tocopherol + S-adenosyl-L-methionine = (+)-alpha-tocopherol + S-adenosyl-L-homocysteine + H(+). It catalyses the reaction delta-tocotrienol + S-adenosyl-L-methionine = beta-tocotrienol + S-adenosyl-L-homocysteine + H(+). The catalysed reaction is gamma-tocotrienol + S-adenosyl-L-methionine = alpha-tocotrienol + S-adenosyl-L-homocysteine + H(+). The enzyme catalyses delta-tocopherol + S-adenosyl-L-methionine = beta-tocopherol + S-adenosyl-L-homocysteine + H(+). It participates in cofactor biosynthesis; tocopherol biosynthesis. Its function is as follows. Involved in the synthesis of tocopherol (vitamin E). Methylates gamma- and delta-tocopherol to form beta- and alpha-tocopherol, respectively. The chain is Tocopherol O-methyltransferase, chloroplastic (VTE4) from Arabidopsis thaliana (Mouse-ear cress).